A 251-amino-acid polypeptide reads, in one-letter code: Ribosomal RNA small subunit methyltransferase J (251 aa).

S-adenosyl-L-methionine contacts are provided by residues 100–101 (RD), 116–117 (ER), and aspartate 170.

Belongs to the methyltransferase superfamily. RsmJ family.

The protein resides in the cytoplasm. The enzyme catalyses guanosine(1516) in 16S rRNA + S-adenosyl-L-methionine = N(2)-methylguanosine(1516) in 16S rRNA + S-adenosyl-L-homocysteine + H(+). Its function is as follows. Specifically methylates the guanosine in position 1516 of 16S rRNA. This chain is Ribosomal RNA small subunit methyltransferase J, found in Actinobacillus pleuropneumoniae serotype 3 (strain JL03).